A 99-amino-acid polypeptide reads, in one-letter code: Small ribosomal subunit protein bS20 (99 aa).

Over residues 1–20 (MASAKPKKKNPRLASGRKRV) the composition is skewed to basic residues. The tract at residues 1–21 (MASAKPKKKNPRLASGRKRVR) is disordered.

Belongs to the bacterial ribosomal protein bS20 family.

Binds directly to 16S ribosomal RNA. The protein is Small ribosomal subunit protein bS20 of Verminephrobacter eiseniae (strain EF01-2).